Reading from the N-terminus, the 217-residue chain is 2-phospho-L-lactate guanylyltransferase (217 aa).

It belongs to the CofC family. In terms of assembly, homodimer.

It catalyses the reaction (2S)-2-phospholactate + GTP + H(+) = (2S)-lactyl-2-diphospho-5'-guanosine + diphosphate. It participates in cofactor biosynthesis; coenzyme F420 biosynthesis. Functionally, guanylyltransferase that catalyzes the activation of (2S)-2-phospholactate (2-PL) as (2S)-lactyl-2-diphospho-5'-guanosine, via the condensation of 2-PL with GTP. It is involved in the biosynthesis of coenzyme F420, a hydride carrier cofactor. The sequence is that of 2-phospho-L-lactate guanylyltransferase from Methanospirillum hungatei JF-1 (strain ATCC 27890 / DSM 864 / NBRC 100397 / JF-1).